Consider the following 350-residue polypeptide: MTYKITSLAGDGIGPEIMTSGLQVLEAVAKKYNHTFEIESHPFGGAGIDVAQDPIPSSTLKACRDADAILLGAIGGPKWDNAPKRPEDGLLALRKALGLFANIRPIQVPSSITHLSPLKKEIVENTDFVVVRELTGGLYFGEPKYWDNEAAVDSLTYTRAEIERIIEKAFEIAATRNKKVTSVDKANVLASSKLWRKIADEVASRHPDITLEHLYVDAAAMLMIQRPTTFDVIVTENLFGDILSDEASVITGSLGMLPSASHAENGPSLYEPIHGSAPDIANQNIANPMSMISSVSMMLRQSFSLFEEADAIDAATARTMQAGFLTADLGGNTSTTDFTNEVLKQIEGGE.

Residue 76-87 (GPKWDNAPKRPE) participates in NAD(+) binding. Substrate is bound by residues Arg-94, Arg-104, Arg-132, and Asp-217. Mg(2+) contacts are provided by Asp-217, Asp-241, and Asp-245. 275 to 287 (GSAPDIANQNIAN) contributes to the NAD(+) binding site.

Belongs to the isocitrate and isopropylmalate dehydrogenases family. LeuB type 1 subfamily. In terms of assembly, homodimer. The cofactor is Mg(2+). Mn(2+) is required as a cofactor.

It is found in the cytoplasm. The catalysed reaction is (2R,3S)-3-isopropylmalate + NAD(+) = 4-methyl-2-oxopentanoate + CO2 + NADH. It participates in amino-acid biosynthesis; L-leucine biosynthesis; L-leucine from 3-methyl-2-oxobutanoate: step 3/4. In terms of biological role, catalyzes the oxidation of 3-carboxy-2-hydroxy-4-methylpentanoate (3-isopropylmalate) to 3-carboxy-4-methyl-2-oxopentanoate. The product decarboxylates to 4-methyl-2 oxopentanoate. This is 3-isopropylmalate dehydrogenase from Listeria monocytogenes serotype 4b (strain F2365).